The primary structure comprises 109 residues: Nucleoid-associated protein Sputw3181_1707 (109 aa).

This sequence belongs to the YbaB/EbfC family. Homodimer.

The protein localises to the cytoplasm. The protein resides in the nucleoid. In terms of biological role, binds to DNA and alters its conformation. May be involved in regulation of gene expression, nucleoid organization and DNA protection. The protein is Nucleoid-associated protein Sputw3181_1707 of Shewanella sp. (strain W3-18-1).